The sequence spans 256 residues: Imidazole glycerol phosphate synthase subunit HisF (256 aa).

Active-site residues include aspartate 12 and aspartate 131.

This sequence belongs to the HisA/HisF family. As to quaternary structure, heterodimer of HisH and HisF.

The protein resides in the cytoplasm. The catalysed reaction is 5-[(5-phospho-1-deoxy-D-ribulos-1-ylimino)methylamino]-1-(5-phospho-beta-D-ribosyl)imidazole-4-carboxamide + L-glutamine = D-erythro-1-(imidazol-4-yl)glycerol 3-phosphate + 5-amino-1-(5-phospho-beta-D-ribosyl)imidazole-4-carboxamide + L-glutamate + H(+). It functions in the pathway amino-acid biosynthesis; L-histidine biosynthesis; L-histidine from 5-phospho-alpha-D-ribose 1-diphosphate: step 5/9. Its function is as follows. IGPS catalyzes the conversion of PRFAR and glutamine to IGP, AICAR and glutamate. The HisF subunit catalyzes the cyclization activity that produces IGP and AICAR from PRFAR using the ammonia provided by the HisH subunit. The polypeptide is Imidazole glycerol phosphate synthase subunit HisF (Pseudomonas syringae pv. syringae (strain B728a)).